The sequence spans 290 residues: Glycine--tRNA ligase alpha subunit (290 aa).

This sequence belongs to the class-II aminoacyl-tRNA synthetase family. Tetramer of two alpha and two beta subunits.

The protein localises to the cytoplasm. The catalysed reaction is tRNA(Gly) + glycine + ATP = glycyl-tRNA(Gly) + AMP + diphosphate. This chain is Glycine--tRNA ligase alpha subunit, found in Nitratiruptor sp. (strain SB155-2).